Here is a 124-residue protein sequence, read N- to C-terminus: Small ribosomal subunit protein uS12 (124 aa).

At Asp89 the chain carries 3-methylthioaspartic acid. A disordered region spans residues 105–124; that stretch reads QGVKNRGQARSRYGAKKEKK. Positions 111-124 are enriched in basic residues; it reads GQARSRYGAKKEKK.

It belongs to the universal ribosomal protein uS12 family. In terms of assembly, part of the 30S ribosomal subunit. Contacts proteins S8 and S17. May interact with IF1 in the 30S initiation complex.

With S4 and S5 plays an important role in translational accuracy. Functionally, interacts with and stabilizes bases of the 16S rRNA that are involved in tRNA selection in the A site and with the mRNA backbone. Located at the interface of the 30S and 50S subunits, it traverses the body of the 30S subunit contacting proteins on the other side and probably holding the rRNA structure together. The combined cluster of proteins S8, S12 and S17 appears to hold together the shoulder and platform of the 30S subunit. This is Small ribosomal subunit protein uS12 from Micrococcus luteus (Micrococcus lysodeikticus).